A 435-amino-acid polypeptide reads, in one-letter code: Citrate synthase (435 aa).

Active-site residues include His-311 and Asp-370.

The protein belongs to the citrate synthase family.

It catalyses the reaction oxaloacetate + acetyl-CoA + H2O = citrate + CoA + H(+). It participates in carbohydrate metabolism; tricarboxylic acid cycle; isocitrate from oxaloacetate: step 1/2. The polypeptide is Citrate synthase (gltA) (Rickettsia bellii (strain RML369-C)).